The chain runs to 555 residues: Cilia- and flagella-associated protein 184 (555 aa).

Over residues 1–12 (MDVSSEHTKDPG) the composition is skewed to basic and acidic residues. Residues 1-202 (MDVSSEHTKD…KSQEEGKRLY (202 aa)) form a disordered region. Composition is skewed to acidic residues over residues 41-54 (GELE…EEEQ) and 95-105 (PEPEEPAEVGA). A compositionally biased stretch (low complexity) spans 106–117 (EEPAQPEPGAGP). Over residues 118–131 (EELEAEAGAEELEQ) the composition is skewed to acidic residues. Residues 174–202 (ETQRDGAESKERDGEGRPAKSQEEGKRLY) are compositionally biased toward basic and acidic residues. 2 coiled-coil regions span residues 305-441 (YHQE…NSVQ) and 505-531 (DSLL…LKRH).

The protein belongs to the CFAP184 family. In terms of assembly, forms a complex with CFAP263; the interaction is required for functional activity in cilia.

The protein localises to the cell projection. Its subcellular location is the cilium. It localises to the cytoplasm. The protein resides in the cytoskeleton. It is found in the microtubule organizing center. The protein localises to the centrosome. Functionally, in complex with CFAP263, acts as a regulator of ciliary beating that connects radial spoke 3 (RS3) to the inner dynein arm (IDA) and the nexin-dynein regulatory complex (N-DRC). The complex is positioned parallel to N-DRC and forms a connection between the arch at the base of RS3, the IDA tail and N-DRC. The sequence is that of Cilia- and flagella-associated protein 184 from Homo sapiens (Human).